We begin with the raw amino-acid sequence, 324 residues long: Delta-aminolevulinic acid dehydratase (324 aa).

3 residues coordinate Zn(2+): Cys118, Cys120, and Cys128. Lys195 (schiff-base intermediate with substrate) is an active-site residue. 5-aminolevulinate contacts are provided by Arg205 and Arg217. Glu233 contacts Mg(2+). Residue Lys248 is the Schiff-base intermediate with substrate of the active site. 2 residues coordinate 5-aminolevulinate: Ser274 and Tyr313.

The protein belongs to the ALAD family. Homooctamer. The cofactor is Zn(2+).

It carries out the reaction 2 5-aminolevulinate = porphobilinogen + 2 H2O + H(+). It participates in porphyrin-containing compound metabolism; protoporphyrin-IX biosynthesis; coproporphyrinogen-III from 5-aminolevulinate: step 1/4. In terms of biological role, catalyzes an early step in the biosynthesis of tetrapyrroles. Binds two molecules of 5-aminolevulinate per subunit, each at a distinct site, and catalyzes their condensation to form porphobilinogen. The protein is Delta-aminolevulinic acid dehydratase (hemB) of Staphylococcus epidermidis (strain ATCC 12228 / FDA PCI 1200).